The sequence spans 477 residues: Regulator of G-protein signaling 7 (477 aa).

The region spanning 37 to 112 is the DEP domain; the sequence is EKNGIPIRTV…DDGTFYRFQT (76 aa). Phosphoserine occurs at positions 229 and 241. The disordered stretch occupies residues 236–257; sequence DIRSHSPTHTPTPETKPPTEDE. Thr243 bears the Phosphothreonine mark. The G protein gamma domain occupies 255–316; sequence EDELHRQIKY…LSDDTTFWEL (62 aa). The RGS domain maps to 333 to 448; sequence GMDEALKDPV…IRSSAYQELL (116 aa). The residue at position 434 (Ser434) is a Phosphoserine.

Interacts with GNB5, forming the RGS7-GNB5 complex. Interacts with GPR158; promotes the GTPase activator activity of the RGS7-GNB5 complex in absence of glycine, in contrast GTPase activator activity of the RGS7-GNB5 complex is inhibited in presence of glycine. Interacts with GPR179. Interacts with PKD1; this prevents rapid proteasomal degradation. Interacts with RGS7BP, leading to regulate the subcellular location of the heterodimer formed with GNB5. Interacts (phosphorylated form) with 14-3-3 protein YWHAQ. Interacts with SNAPIN. Interacts with GNAI1. Interacts with GNAO1, GNAI3 and GNAZ. In terms of processing, palmitoylated. Post-translationally, ubiquitinated, leading to rapid proteasomal degradation. Phosphorylation and subsequent interaction with 14-3-3 proteins inhibits GAP activity. In terms of tissue distribution, brain-specific. Predominantly cerebellar granule cells.

It localises to the cytoplasm. The protein resides in the cytosol. The protein localises to the cell membrane. It is found in the membrane. GTPase activator component of the RGS7-GNB5 complex that regulates G protein-coupled receptor signaling cascades. The RGS7-GNB5 complex acts as an inhibitor signal transduction by promoting the GTPase activity of G protein alpha subunits, such as GNAO1, thereby driving them into their inactive GDP-bound form. May play a role in synaptic vesicle exocytosis. Glycine-dependent regulation of the RGS7-GNB5 complex by GPR158 affects mood and cognition via its ability to regulate neuronal excitability in L2/L3 pyramidal neurons of the prefrontal cortex. Modulates the activity of potassium channels that are activated by GNAO1 in response to muscarinic acetylcholine receptor M2/CHRM2 signaling. The chain is Regulator of G-protein signaling 7 (Rgs7) from Rattus norvegicus (Rat).